The sequence spans 467 residues: ATP synthase subunit beta (467 aa).

150 to 157 (GGAGVGKT) serves as a coordination point for ATP.

The protein belongs to the ATPase alpha/beta chains family. As to quaternary structure, F-type ATPases have 2 components, CF(1) - the catalytic core - and CF(0) - the membrane proton channel. CF(1) has five subunits: alpha(3), beta(3), gamma(1), delta(1), epsilon(1). CF(0) has three main subunits: a(1), b(2) and c(9-12). The alpha and beta chains form an alternating ring which encloses part of the gamma chain. CF(1) is attached to CF(0) by a central stalk formed by the gamma and epsilon chains, while a peripheral stalk is formed by the delta and b chains.

The protein resides in the cell inner membrane. It carries out the reaction ATP + H2O + 4 H(+)(in) = ADP + phosphate + 5 H(+)(out). Functionally, produces ATP from ADP in the presence of a proton gradient across the membrane. The catalytic sites are hosted primarily by the beta subunits. The protein is ATP synthase subunit beta of Vibrio parahaemolyticus serotype O3:K6 (strain RIMD 2210633).